We begin with the raw amino-acid sequence, 120 residues long: MSASVPADLRNLRACLLCSLVKSVESFQKEGCENCEDVLHLKGDEEKVYDCTSANYDGMIAAMSNNESWVCKWQKMQRKVKGMYAISVSGVLPNNIVSELKSLGVRYKPNQRDYSTQFKK.

The segment at 1 to 39 (MSASVPADLRNLRACLLCSLVKSVESFQKEGCENCEDVL) is interaction with spt-5. The segment at 15 to 35 (CLLCSLVKSVESFQKEGCENC) adopts a C4-type zinc-finger fold.

Belongs to the SPT4 family. As to quaternary structure, interacts with spt-5 to form DSIF. DSIF interacts with RNA polymerase II and with the positive transcription elongation factor b complex (P-TEFb complex), which is composed of cdk-9 and cyclin-T (cit-1.1 or cit-1.2).

It is found in the nucleus. May function as a component of the DRB sensitivity-inducing factor complex (DSIF complex), which regulates transcription elongation by RNA polymerase II. DSIF may enhance transcriptional pausing at sites proximal to the promoter, which may in turn facilitate the assembly of an elongation competent RNA polymerase II complex. The chain is Transcription elongation factor SPT4 (spt-4) from Caenorhabditis elegans.